Reading from the N-terminus, the 301-residue chain is Mitochondrial carnitine/acylcarnitine carrier protein (301 aa).

An N-acetylalanine modification is found at Ala-2. Topologically, residues 2 to 12 are cytoplasmic; that stretch reads ADQPKPISPLK. 3 Solcar repeats span residues 8–99, 108–196, and 207–293; these read ISPL…GKKL, LSYP…LKNI, and LSAP…AMKF. Residues 13-31 form a helical membrane-spanning segment; sequence NLLAGGFGGVCLVFVGHPL. Residues 32-73 lie on the Mitochondrial matrix side of the membrane; sequence DTVKVRLQTQPPSLPGQPPMYSGTFDCFRKTLFREGITGLYR. Residues 74-93 form a helical membrane-spanning segment; it reads GMAAPIIGVTPMFAVCFFGF. Topologically, residues 94–112 are cytoplasmic; the sequence is GLGKKLQQKHPEDVLSYPQ. The helical transmembrane segment at 113 to 131 threads the bilayer; it reads LFAAGMLSGVFTTGIMTPG. Topologically, residues 132 to 170 are mitochondrial matrix; sequence ERIKCLLQIQASSGESKYTGTLDCAKKLYQEFGIRGIYK. N6-acetyllysine occurs at positions 148 and 157. Lys-170 is modified (N6-acetyllysine; alternate). An N6-succinyllysine; alternate modification is found at Lys-170. The chain crosses the membrane as a helical span at residues 171-190; that stretch reads GTVLTLMRDVPASGMYFMTY. Topologically, residues 191–211 are cytoplasmic; the sequence is EWLKNIFTPEGKRVSELSAPR. A helical transmembrane segment spans residues 212 to 230; the sequence is ILVAGGIAGIFNWAVAIPP. Topologically, residues 231 to 267 are mitochondrial matrix; the sequence is DVLKSRFQTAPPGKYPNGFRDVLRELIRDEGVTSLYK. A helical transmembrane segment spans residues 268 to 287; sequence GFNAVMIRAFPANAACFLGF. Over 288 to 301 the chain is Cytoplasmic; that stretch reads EVAMKFLNWATPNL.

Belongs to the mitochondrial carrier (TC 2.A.29) family.

It localises to the mitochondrion inner membrane. It catalyses the reaction O-acetyl-(R)-carnitine(in) + (R)-carnitine(out) = O-acetyl-(R)-carnitine(out) + (R)-carnitine(in). The catalysed reaction is an O-acyl-(R)-carnitine(in) + (R)-carnitine(out) = an O-acyl-(R)-carnitine(out) + (R)-carnitine(in). It carries out the reaction O-propanoyl-(R)-carnitine(in) + (R)-carnitine(out) = O-propanoyl-(R)-carnitine(out) + (R)-carnitine(in). The enzyme catalyses O-hexadecanoyl-(R)-carnitine(in) + (R)-carnitine(out) = O-hexadecanoyl-(R)-carnitine(out) + (R)-carnitine(in). It catalyses the reaction O-octanoyl-(R)-carnitine(in) + (R)-carnitine(out) = O-octanoyl-(R)-carnitine(out) + (R)-carnitine(in). The catalysed reaction is (R)-carnitine(in) = (R)-carnitine(out). Mediates the electroneutral exchange of acylcarnitines (O-acyl-(R)-carnitine or L-acylcarnitine) of different acyl chain lengths (ranging from O-acetyl-(R)-carnitine to long-chain O-acyl-(R)-carnitines) with free carnitine ((R)-carnitine or L-carnitine) across the mitochondrial inner membrane, via a ping-pong mechanism. Key player in the mitochondrial oxidation pathway, it translocates the fatty acids in the form of acylcarnitines into the mitochondrial matrix, where the carnitine palmitoyltransferase 2 (CPT-2) activates them to undergo fatty acid beta-oxidation. Catalyzes the unidirectional transport (uniport) of carnitine at lower rates than the antiport (exchange). The polypeptide is Mitochondrial carnitine/acylcarnitine carrier protein (Homo sapiens (Human)).